The primary structure comprises 548 residues: Probable malate:quinone oxidoreductase (548 aa).

Residues 521–548 (DKPQAADSTPKPQLKPQPVQKEVADIAL) form a disordered region. The segment covering 530 to 541 (PKPQLKPQPVQK) has biased composition (low complexity).

The protein belongs to the MQO family. FAD is required as a cofactor.

It carries out the reaction (S)-malate + a quinone = a quinol + oxaloacetate. It participates in carbohydrate metabolism; tricarboxylic acid cycle; oxaloacetate from (S)-malate (quinone route): step 1/1. In Escherichia coli (strain UTI89 / UPEC), this protein is Probable malate:quinone oxidoreductase.